Reading from the N-terminus, the 778-residue chain is Pentatricopeptide repeat-containing protein At3g09650, chloroplastic (778 aa).

A chloroplast-targeting transit peptide spans 1 to 65 (MNILRPPTSS…RSASGTANSS (65 aa)). 3 PPR repeats span residues 235–269 (DTAA…DCEP), 270–304 (DVLT…GIKV), and 305–339 (CMTT…RRDL). The segment at 351-381 (LKEKEEEEAEDDEDAFEDDEDSGYSARDEVS) is disordered. Residues 355-372 (EEEEAEDDEDAFEDDEDS) show a composition bias toward acidic residues. PPR repeat units follow at residues 413–443 (DSRI…MRRQ), 451–485 (DEVT…GVPA), 486–521 (NRIT…GIEP), 522–556 (DVVS…GIAP), 557–587 (TKIS…MMND), 593–627 (DLIA…GFYP), and 628–658 (NVAT…IKER).

It belongs to the PPR family. P subfamily.

It localises to the plastid. It is found in the chloroplast stroma. In terms of biological role, involved in the processing of polycistronic chloroplast psbB-psbT-psbH-petB-petD transcript. Could bind RNA. The protein is Pentatricopeptide repeat-containing protein At3g09650, chloroplastic (HCF152) of Arabidopsis thaliana (Mouse-ear cress).